The primary structure comprises 188 residues: Elongation factor P (188 aa).

Belongs to the elongation factor P family.

Its subcellular location is the cytoplasm. It participates in protein biosynthesis; polypeptide chain elongation. Functionally, involved in peptide bond synthesis. Stimulates efficient translation and peptide-bond synthesis on native or reconstituted 70S ribosomes in vitro. Probably functions indirectly by altering the affinity of the ribosome for aminoacyl-tRNA, thus increasing their reactivity as acceptors for peptidyl transferase. This chain is Elongation factor P, found in Natranaerobius thermophilus (strain ATCC BAA-1301 / DSM 18059 / JW/NM-WN-LF).